We begin with the raw amino-acid sequence, 122 residues long: Large ribosomal subunit protein uL14 (122 aa).

It belongs to the universal ribosomal protein uL14 family. Part of the 50S ribosomal subunit. Forms a cluster with proteins L3 and L19. In the 70S ribosome, L14 and L19 interact and together make contacts with the 16S rRNA in bridges B5 and B8.

Functionally, binds to 23S rRNA. Forms part of two intersubunit bridges in the 70S ribosome. In Fusobacterium nucleatum subsp. nucleatum (strain ATCC 25586 / DSM 15643 / BCRC 10681 / CIP 101130 / JCM 8532 / KCTC 2640 / LMG 13131 / VPI 4355), this protein is Large ribosomal subunit protein uL14.